A 361-amino-acid polypeptide reads, in one-letter code: Blue-sensitive opsin (361 aa).

Over 1–43 (MHPPRPTTDLPEDFYIPMALDAPNITALSPFLVPQTHLGSPGL) the chain is Extracellular. The N-linked (GlcNAc...) asparagine glycan is linked to asparagine 24. Residues 44-68 (FRAMAAFMFLLIALGVPINTLTIFC) form a helical membrane-spanning segment. At 69 to 80 (TARFRKLRSHLN) the chain is on the cytoplasmic side. The chain crosses the membrane as a helical span at residues 81–106 (YILVNLALANLLVILVGSTTACYSFS). Over 107 to 120 (QMYFALGPTACKIE) the chain is Extracellular. Cysteine 117 and cysteine 194 are oxidised to a cystine. The chain crosses the membrane as a helical span at residues 121–140 (GFAATLGGMVSLWSLAVVAF). Topologically, residues 141–159 (ERFLVICKPLGNFTFRGSH) are cytoplasmic. The helical transmembrane segment at 160–183 (AVLGCVATWVLGFVASAPPLFGWS) threads the bilayer. At 184 to 209 (RYIPEGLQCSCGPDWYTTDNKWHNES) the chain is on the extracellular side. Residues 210–237 (YVLFLFTFCFGVPLAIIVFSYGRLLITL) form a helical membrane-spanning segment. Over 238–259 (RAVARQQEQSATTQKADREVTK) the chain is Cytoplasmic. A helical transmembrane segment spans residues 260 to 283 (MVVVMVLGFLVCWAPYTAFALWVV). The Extracellular segment spans residues 284–291 (THRGRSFE). A helical transmembrane segment spans residues 292–316 (VGLASIPSVFSKSSTVYNPVIYVLM). Lysine 303 bears the N6-(retinylidene)lysine mark. The Cytoplasmic portion of the chain corresponds to 317 to 361 (NKQFRSCMLKLLFCGRSPFGDDEDVSGSSQATQVSSVSSSHVAPA). The segment at 338–361 (DEDVSGSSQATQVSSVSSSHVAPA) is disordered. Low complexity predominate over residues 342 to 361 (SGSSQATQVSSVSSSHVAPA).

It belongs to the G-protein coupled receptor 1 family. Opsin subfamily. Post-translationally, phosphorylated on some or all of the serine and threonine residues present in the C-terminal region. As to expression, the color pigments are found in the cone photoreceptor cells.

Its subcellular location is the membrane. In terms of biological role, visual pigments are the light-absorbing molecules that mediate vision. They consist of an apoprotein, opsin, covalently linked to cis-retinal. The protein is Blue-sensitive opsin of Gallus gallus (Chicken).